Consider the following 145-residue polypeptide: Small ribosomal subunit protein bS6 (145 aa).

Positions 113 to 132 (ENMKKNERKAPKEPVKKDEE) are enriched in basic and acidic residues. The segment at 113 to 145 (ENMKKNERKAPKEPVKKDEEENKESEEEITSEE) is disordered. Acidic residues predominate over residues 133-145 (ENKESEEEITSEE).

Belongs to the bacterial ribosomal protein bS6 family.

Functionally, binds together with bS18 to 16S ribosomal RNA. The chain is Small ribosomal subunit protein bS6 from Campylobacter hominis (strain ATCC BAA-381 / DSM 21671 / CCUG 45161 / LMG 19568 / NCTC 13146 / CH001A).